The primary structure comprises 316 residues: NAC domain-containing protein 22 (316 aa).

The region spanning 17-170 (DLPGFRFHPT…DMVLCKIYRK (154 aa)) is the NAC domain. A DNA-binding region spans residues 117–176 (IGLKKTLVFYQGRAPRGTKTDWVMNEYRLPDYGAARAAAPPPKEDMVLCKIYRKATPLKE). The segment at 229-260 (QSSSSSAAPSGSSSKNGGAGAPREAKKEEADV) is disordered. The span at 230–244 (SSSSSAAPSGSSSKN) shows a compositional bias: low complexity.

It is found in the nucleus. In terms of biological role, transcription activator that binds sequence-specific DNA motifs. Involved in stress response. Plays a positive role in drought and salt stress tolerance through the modulation of abscisic acid-mediated signaling. This Oryza sativa subsp. japonica (Rice) protein is NAC domain-containing protein 22.